The chain runs to 277 residues: Sulfur carrier protein FdhD (277 aa).

The active-site Cysteine persulfide intermediate is the Cys-121. Mo-bis(molybdopterin guanine dinucleotide) is bound at residue 260-265; the sequence is FCKPGR.

It belongs to the FdhD family.

The protein resides in the cytoplasm. Required for formate dehydrogenase (FDH) activity. Acts as a sulfur carrier protein that transfers sulfur from IscS to the molybdenum cofactor prior to its insertion into FDH. In Escherichia coli O81 (strain ED1a), this protein is Sulfur carrier protein FdhD.